The following is a 269-amino-acid chain: Ribosomal RNA small subunit methyltransferase A (269 aa).

Asparagine 18, leucine 20, glycine 45, glutamate 66, aspartate 91, and asparagine 112 together coordinate S-adenosyl-L-methionine.

The protein belongs to the class I-like SAM-binding methyltransferase superfamily. rRNA adenine N(6)-methyltransferase family. RsmA subfamily.

It is found in the cytoplasm. The enzyme catalyses adenosine(1518)/adenosine(1519) in 16S rRNA + 4 S-adenosyl-L-methionine = N(6)-dimethyladenosine(1518)/N(6)-dimethyladenosine(1519) in 16S rRNA + 4 S-adenosyl-L-homocysteine + 4 H(+). Functionally, specifically dimethylates two adjacent adenosines (A1518 and A1519) in the loop of a conserved hairpin near the 3'-end of 16S rRNA in the 30S particle. May play a critical role in biogenesis of 30S subunits. The chain is Ribosomal RNA small subunit methyltransferase A from Shewanella loihica (strain ATCC BAA-1088 / PV-4).